The chain runs to 142 residues: Interleukin-3 (142 aa).

Positions 1 to 18 are cleaved as a signal peptide; sequence MSHLPILLLLLLVSPGLQ. N33 carries an N-linked (GlcNAc...) asparagine glycan. A disulfide bridge links C34 with C102.

Belongs to the IL-3 family. As to quaternary structure, monomer. As to expression, activated T-cells, mast cells, natural killer cells.

It is found in the secreted. In terms of biological role, granulocyte/macrophage colony-stimulating factors are cytokines that act in hematopoiesis by controlling the production, differentiation, and function of 2 related white cell populations of the blood, the granulocytes and the monocytes-macrophages. Functionally, this CSF induces granulocytes, macrophages, mast cells, stem cells, erythroid cells, eosinophils and megakaryocytes. The polypeptide is Interleukin-3 (IL3) (Callithrix jacchus (White-tufted-ear marmoset)).